We begin with the raw amino-acid sequence, 333 residues long: Geminin coiled-coil domain-containing protein 1 (333 aa).

The stretch at 83 to 118 forms a coiled coil; the sequence is QLYRNKQLQDTLLQKEEELARLHEENNHLRQYLNST. Over residues 145 to 154 the composition is skewed to basic residues; that stretch reads KEKRKPKEHR. The disordered stretch occupies residues 145 to 165; that stretch reads KEKRKPKEHRHSPAEIPQFKT.

Belongs to the GEMC1 family. Highly phosphorylated by CDK2; stimulates initiation of DNA replication.

Its subcellular location is the nucleus. Regulator of DNA replication. Promotes initiation of chromosomal DNA replication by mediating TOPBP1- and CDK2-dependent recruitment of CDC45L onto replication origins. The polypeptide is Geminin coiled-coil domain-containing protein 1 (Gmnc) (Mus musculus (Mouse)).